The primary structure comprises 556 residues: MNHNEALTKQVYTFASELYAYGVREVVISPGSRSTPLAIAFEAHPNIKTWIHPDERSAAFFALGLIKGSERPVAILCTSGTAAANYTPAIAESQISRIPLIVLTSDRPHELRSVGAPQAINQVNMFANYVNFQFDMPVADGTDYMLDAIYYQMQIASQYLYGPHRGPIHFNLPFREPLTPNLERQEWLTSYSKKLPHYQKNINVQDIRHILKEKKGLIIVGDMQHQAIDQILTYATVHDIPILADPLSQLRKYNHPNVITTYDLYYRAGLDIDVDFVIRVGKPVISKKLNQWLKRTNAYQILVQNNDKIDVFPTPPSISYEISANDFFRNLIEEAAVDRKDWINMWRTLESQARNTIDKHMTNATDEAAFVKILIDKLTKDDAIFVSNSMPVRDIDNLLYNSEVEVYANRGANGIDGVVSTAIGMAVHKKITLIIGDLAFYHDMNGLLMAKINNINLNIVLLNNDGGGIFSYLPQKASAEAYFERLFGTPTGLNFEYTALLYDFTFKRFNTVADFTQEKLSHVNSHIYEMVTNRDDNMSQHQILYKKLSGILNVTL.

This sequence belongs to the TPP enzyme family. MenD subfamily. As to quaternary structure, homodimer. The cofactor is Mg(2+). Requires Mn(2+) as cofactor. It depends on thiamine diphosphate as a cofactor.

The catalysed reaction is isochorismate + 2-oxoglutarate + H(+) = 5-enolpyruvoyl-6-hydroxy-2-succinyl-cyclohex-3-ene-1-carboxylate + CO2. It participates in quinol/quinone metabolism; 1,4-dihydroxy-2-naphthoate biosynthesis; 1,4-dihydroxy-2-naphthoate from chorismate: step 2/7. Its pathway is quinol/quinone metabolism; menaquinone biosynthesis. In terms of biological role, catalyzes the thiamine diphosphate-dependent decarboxylation of 2-oxoglutarate and the subsequent addition of the resulting succinic semialdehyde-thiamine pyrophosphate anion to isochorismate to yield 2-succinyl-5-enolpyruvyl-6-hydroxy-3-cyclohexene-1-carboxylate (SEPHCHC). In Staphylococcus haemolyticus (strain JCSC1435), this protein is 2-succinyl-5-enolpyruvyl-6-hydroxy-3-cyclohexene-1-carboxylate synthase.